Here is a 305-residue protein sequence, read N- to C-terminus: Oxygen-dependent coproporphyrinogen-III oxidase (305 aa).

Residue serine 93 participates in substrate binding. Histidine 97 and histidine 107 together coordinate a divalent metal cation. Histidine 107 (proton donor) is an active-site residue. Asparagine 109–arginine 111 serves as a coordination point for substrate. 2 residues coordinate a divalent metal cation: histidine 146 and histidine 176. Residues tyrosine 241–glycine 276 form an important for dimerization region. Glycine 259–arginine 261 provides a ligand contact to substrate.

Belongs to the aerobic coproporphyrinogen-III oxidase family. As to quaternary structure, homodimer. It depends on a divalent metal cation as a cofactor.

Its subcellular location is the cytoplasm. It carries out the reaction coproporphyrinogen III + O2 + 2 H(+) = protoporphyrinogen IX + 2 CO2 + 2 H2O. The protein operates within porphyrin-containing compound metabolism; protoporphyrin-IX biosynthesis; protoporphyrinogen-IX from coproporphyrinogen-III (O2 route): step 1/1. In terms of biological role, involved in the heme biosynthesis. Catalyzes the aerobic oxidative decarboxylation of propionate groups of rings A and B of coproporphyrinogen-III to yield the vinyl groups in protoporphyrinogen-IX. This Pseudomonas aeruginosa (strain LESB58) protein is Oxygen-dependent coproporphyrinogen-III oxidase.